Here is a 1073-residue protein sequence, read N- to C-terminus: Carbamoyl phosphate synthase large chain (1073 aa).

The tract at residues 1–399 (MPKREDIKKV…SLLKAFKSLD (399 aa)) is carboxyphosphate synthetic domain. Positions 129, 169, 175, 176, 208, 210, 215, 241, 242, 243, 284, and 296 each coordinate ATP. The region spanning 133-325 (KETMLSIGEK…IARVTAKIAI (193 aa)) is the ATP-grasp 1 domain. The Mg(2+) site is built by Q284, E296, and N298. Residues Q284, E296, and N298 each contribute to the Mn(2+) site. The segment at 400–540 (IDNQLGIKRW…YSTYEDTCET (141 aa)) is oligomerization domain. The carbamoyl phosphate synthetic domain stretch occupies residues 541–931 (NSTDKKKILI…YKAELAADNL (391 aa)). The ATP-grasp 2 domain occupies 672–863 (YLLMQELGIP…LAKIAAKVIA (192 aa)). Positions 708, 747, 749, 754, 779, 780, 781, 782, 822, and 834 each coordinate ATP. Residues Q822, E834, and N836 each coordinate Mg(2+). Q822, E834, and N836 together coordinate Mn(2+). Positions 930–1071 (NLLPLTGKVF…NEYHKEMEQK (142 aa)) constitute an MGS-like domain. The interval 932 to 1073 (LPLTGKVFLS…YHKEMEQKEE (142 aa)) is allosteric domain.

This sequence belongs to the CarB family. As to quaternary structure, composed of two chains; the small (or glutamine) chain promotes the hydrolysis of glutamine to ammonia, which is used by the large (or ammonia) chain to synthesize carbamoyl phosphate. Tetramer of heterodimers (alpha,beta)4. Mg(2+) is required as a cofactor. The cofactor is Mn(2+).

It catalyses the reaction hydrogencarbonate + L-glutamine + 2 ATP + H2O = carbamoyl phosphate + L-glutamate + 2 ADP + phosphate + 2 H(+). The enzyme catalyses hydrogencarbonate + NH4(+) + 2 ATP = carbamoyl phosphate + 2 ADP + phosphate + 2 H(+). It functions in the pathway amino-acid biosynthesis; L-arginine biosynthesis; carbamoyl phosphate from bicarbonate: step 1/1. The protein operates within pyrimidine metabolism; UMP biosynthesis via de novo pathway; (S)-dihydroorotate from bicarbonate: step 1/3. Functionally, large subunit of the glutamine-dependent carbamoyl phosphate synthetase (CPSase). CPSase catalyzes the formation of carbamoyl phosphate from the ammonia moiety of glutamine, carbonate, and phosphate donated by ATP, constituting the first step of 2 biosynthetic pathways, one leading to arginine and/or urea and the other to pyrimidine nucleotides. The large subunit (synthetase) binds the substrates ammonia (free or transferred from glutamine from the small subunit), hydrogencarbonate and ATP and carries out an ATP-coupled ligase reaction, activating hydrogencarbonate by forming carboxy phosphate which reacts with ammonia to form carbamoyl phosphate. The chain is Carbamoyl phosphate synthase large chain from Methanosarcina mazei (strain ATCC BAA-159 / DSM 3647 / Goe1 / Go1 / JCM 11833 / OCM 88) (Methanosarcina frisia).